The sequence spans 227 residues: PKHD-type hydroxylase Bcen_3557 (227 aa).

The region spanning 78 to 178 (KVFPPLFNRY…RVASFFWIQS (101 aa)) is the Fe2OG dioxygenase domain. The Fe cation site is built by His-96, Asp-98, and His-159. Arg-169 contributes to the 2-oxoglutarate binding site.

Fe(2+) serves as cofactor. L-ascorbate is required as a cofactor.

This Burkholderia orbicola (strain AU 1054) protein is PKHD-type hydroxylase Bcen_3557.